Reading from the N-terminus, the 438-residue chain is Anthranilate synthase component 1 (438 aa).

Residues serine 45 and 220–222 contribute to the L-tryptophan site; that span reads PYL. Residue 255 to 256 participates in chorismate binding; it reads GT. Glutamate 282 is a binding site for Mg(2+). Chorismate contacts are provided by residues tyrosine 370, arginine 389, 405-407, and glycine 407; that span reads GAG. Mg(2+) is bound at residue glutamate 420.

The protein belongs to the anthranilate synthase component I family. Heterotetramer consisting of two non-identical subunits: a beta subunit (TrpG) and a large alpha subunit (TrpE). It depends on Mg(2+) as a cofactor.

The catalysed reaction is chorismate + L-glutamine = anthranilate + pyruvate + L-glutamate + H(+). Its pathway is amino-acid biosynthesis; L-tryptophan biosynthesis; L-tryptophan from chorismate: step 1/5. Its activity is regulated as follows. Feedback inhibited by tryptophan. Functionally, part of a heterotetrameric complex that catalyzes the two-step biosynthesis of anthranilate, an intermediate in the biosynthesis of L-tryptophan. In the first step, the glutamine-binding beta subunit (TrpG) of anthranilate synthase (AS) provides the glutamine amidotransferase activity which generates ammonia as a substrate that, along with chorismate, is used in the second step, catalyzed by the large alpha subunit of AS (TrpE) to produce anthranilate. In the absence of TrpG, TrpE can synthesize anthranilate directly from chorismate and high concentrations of ammonia. In Aeropyrum pernix (strain ATCC 700893 / DSM 11879 / JCM 9820 / NBRC 100138 / K1), this protein is Anthranilate synthase component 1 (trpE).